Reading from the N-terminus, the 475-residue chain is Aspartyl/glutamyl-tRNA(Asn/Gln) amidotransferase subunit B (475 aa).

The protein belongs to the GatB/GatE family. GatB subfamily. As to quaternary structure, heterotrimer of A, B and C subunits.

The catalysed reaction is L-glutamyl-tRNA(Gln) + L-glutamine + ATP + H2O = L-glutaminyl-tRNA(Gln) + L-glutamate + ADP + phosphate + H(+). The enzyme catalyses L-aspartyl-tRNA(Asn) + L-glutamine + ATP + H2O = L-asparaginyl-tRNA(Asn) + L-glutamate + ADP + phosphate + 2 H(+). In terms of biological role, allows the formation of correctly charged Asn-tRNA(Asn) or Gln-tRNA(Gln) through the transamidation of misacylated Asp-tRNA(Asn) or Glu-tRNA(Gln) in organisms which lack either or both of asparaginyl-tRNA or glutaminyl-tRNA synthetases. The reaction takes place in the presence of glutamine and ATP through an activated phospho-Asp-tRNA(Asn) or phospho-Glu-tRNA(Gln). The protein is Aspartyl/glutamyl-tRNA(Asn/Gln) amidotransferase subunit B of Thermodesulfovibrio yellowstonii (strain ATCC 51303 / DSM 11347 / YP87).